The following is a 293-amino-acid chain: 33 kDa chaperonin (293 aa).

2 disulfides stabilise this stretch: C237–C239 and C271–C274.

This sequence belongs to the HSP33 family. Under oxidizing conditions two disulfide bonds are formed involving the reactive cysteines. Under reducing conditions zinc is bound to the reactive cysteines and the protein is inactive.

It is found in the cytoplasm. Its function is as follows. Redox regulated molecular chaperone. Protects both thermally unfolding and oxidatively damaged proteins from irreversible aggregation. Plays an important role in the bacterial defense system toward oxidative stress. This Haemophilus influenzae (strain ATCC 51907 / DSM 11121 / KW20 / Rd) protein is 33 kDa chaperonin.